A 184-amino-acid polypeptide reads, in one-letter code: Large ribosomal subunit protein uL5c (184 aa).

It belongs to the universal ribosomal protein uL5 family. Part of the 50S ribosomal subunit; contacts the 5S rRNA.

It localises to the plastid. The protein localises to the chloroplast. Its function is as follows. Binds 5S rRNA, forms part of the central protuberance of the 50S subunit. The chain is Large ribosomal subunit protein uL5c (rpl5) from Zygnema circumcarinatum (Green alga).